The following is a 2839-amino-acid chain: MAAHRPVEWVQAVVSRFDEQLPIKTGQQNTHTKVSTEHNKECLINISKYKFSLVISGLTTILKNVNNMRIFGEAAEKNLYLSQLIILDTLEKCLAGQPKDTMRLDETMLVKQLLPEICHFLHTCREGNQHAAELRNSASGVLFSLSCNNFNAVFSRISTRLQELTVCSEDNVDVHDIELLQYINVDCAKLKRLLKETAFKFKALKKVAQLAVINSLEKAFWNWVENYPDEFTKLYQIPQTDMAECAEKLFDLVDGFAESTKRKAAVWPLQIILLILCPEIIQDISKDVVDENNMNKKLFLDSLRKALAGHGGSRQLTESAAIACVKLCKASTYINWEDNSVIFLLVQSMVVDLKNLLFNPSKPFSRGSQPADVDLMIDCLVSCFRISPHNNQHFKICLAQNSPSTFHYVLVNSLHRIITNSALDWWPKIDAVYCHSVELRNMFGETLHKAVQGCGAHPAIRMAPSLTFKEKVTSLKFKEKPTDLETRSYKYLLLSMVKLIHADPKLLLCNPRKQGPETQGSTAELITGLVQLVPQSHMPEIAQEAMEALLVLHQLDSIDLWNPDAPVETFWEISSQMLFYICKKLTSHQMLSSTEILKWLREILICRNKFLLKNKQADRSSCHFLLFYGVGCDIPSSGNTSQMSMDHEELLRTPGASLRKGKGNSSMDSAAGCSGTPPICRQAQTKLEVALYMFLWNPDTEAVLVAMSCFRHLCEEADIRCGVDEVSVHNLLPNYNTFMEFASVSNMMSTGRAALQKRVMALLRRIEHPTAGNTEAWEDTHAKWEQATKLILNYPKAKMEDGQAAESLHKTIVKRRMSHVSGGGSIDLSDTDSLQEWINMTGFLCALGGVCLQQRSNSGLATYSPPMGPVSERKGSMISVMSSEGNADTPVSKFMDRLLSLMVCNHEKVGLQIRTNVKDLVGLELSPALYPMLFNKLKNTISKFFDSQGQVLLTDTNTQFVEQTIAIMKNLLDNHTEGSSEHLGQASIETMMLNLVRYVRVLGNMVHAIQIKTKLCQLVEVMMARRDDLSFCQEMKFRNKMVEYLTDWVMGTSNQAADDDVKCLTRDLDQASMEAVVSLLAGLPLQPEEGDGVELMEAKSQLFLKYFTLFMNLLNDCSEVEDESAQTGGRKRGMSRRLASLRHCTVLAMSNLLNANVDSGLMHSIGLGYHKDLQTRATFMEVLTKILQQGTEFDTLAETVLADRFERLVELVTMMGDQGELPIAMALANVVPCSQWDELARVLVTLFDSRHLLYQLLWNMFSKEVELADSMQTLFRGNSLASKIMTFCFKVYGATYLQKLLDPLLRIVITSSDWQHVSFEVDPTRLEPSESLEENQRNLLQMTEKFFHAIISSSSEFPPQLRSVCHCLYQATCHSLLNKATVKEKKENKKSVVSQRFPQNSIGAVGSAMFLRFINPAIVSPYEAGILDKKPPPRIERGLKLMSKILQSIANHVLFTKEEHMRPFNDFVKSNFDAARRFFLDIASDCPTSDAVNHSLSFISDGNVLALHRLLWNNQEKIGQYLSSNRDHKAVGRRPFDKMATLLAYLGPPEHKPVADTHWSSLNLTSSKFEEFMTRHQVHEKEEFKALKTLSIFYQAGTSKAGNPIFYYVARRFKTGQINGDLLIYHVLLTLKPYYAKPYEIVVDLTHTGPSNRFKTDFLSKWFVVFPGFAYDNVSAVYIYNCNSWVREYTKYHERLLTGLKGSKRLVFIDCPGKLAEHIEHEQQKLPAATLALEEDLKVFHNALKLAHKDTKVSIKVGSTAVQVTSAERTKVLGQSVFLNDIYYASEIEEICLVDENQFTLTIANQGTPLTFMHQECEAIVQSIIHIRTRWELSQPDSIPQHTKIRPKDVPGTLLNIALLNLGSSDPSLRSAAYNLLCALTCTFNLKIEGQLLETSGLCIPANNTLFIVSISKTLAANEPHLTLEFLEECISGFSKSSIELKHLCLEYMTPWLSNLVRFCKHNDDAKRQRVTAILDKLITMTINEKQMYPSIQAKIWGSLGQITDLLDVVLDSFIKTSATGGLGSIKAEVMADTAVALASGNVKLVSSKVIGRMCKIIDKTCLSPTPTLEQHLMWDDIAILARYMLMLSFNNSLDVAAHLPYLFHVVTFLVATGPLSLRASTHGLVINIIHSLCTCSQLHFSEETKQVLRLSLTEFSLPKFYLLFGISKVKSAAVIAFRSSYRDRSFSPGSYERETFALTSLETVTEALLEIMEACMRDIPTCKWLDQWTELAQRFAFQYNPSLQPRALVVFGCISKRVSHGQIKQIIRILSKALESCLKGPDTYNSQVLIEATVIALTKLQPLLNKDSPLHKALFWVAVAVLQLDEVNLYSAGTALLEQNLHTLDSLRIFNDKSPEEVFMAIRNPLEWHCKQMDHFVGLNFNSNFNFALVGHLLKGYRHPSPAIVARTVRILHTLLTLVNKHRNCDKFEVNTQSVAYLAALLTVSEEVRSRCSLKHRKSLLLTDISMENVPMDTYPIHHGDPSYRTLKETQPWSSPKGSEGYLAATYPTVGQTSPRARKSMSLDMGQPSQANTKKLLGTRKSFDHLISDTKAPKRQEMESGITTPPKMRRVAETDYEMETQRISSSQQHPHLRKVSVSESNVLLDEEVLTDPKIQALLLTVLATLVKYTTDEFDQRILYEYLAEASVVFPKVFPVVHNLLDSKINTLLSLCQDPNLLNPIHGIVQSVVYHEESPPQYQTSYLQSFGFNGLWRFAGPFSKQTQIPDYAELIVKFLDALIDTYLPGIDEETSEESLLTPTSPYPPALQSQLSITANLNLSNSMTSLATSQHSPGIDKENVELSPTTGHCNSGRTRHGSASQVQKQRSAGSFKRNSIKKIV.

Alanine 2 bears the N-acetylalanine mark. 2 positions are modified to phosphoserine: serine 864 and serine 876. The 232-residue stretch at 1251 to 1482 (HLLYQLLWNM…DAARRFFLDI (232 aa)) folds into the Ras-GAP domain. The 159-residue stretch at 1580–1738 (EKEEFKALKT…ATLALEEDLK (159 aa)) folds into the CRAL-TRIO domain. The interval 1580 to 1837 (EKEEFKALKT…RTRWELSQPD (258 aa)) is lipid binding. 2 positions are modified to phosphoserine: serine 2188 and serine 2467. Threonine 2514 bears the Phosphothreonine mark. Phosphoserine is present on residues serine 2515, serine 2521, serine 2523, and serine 2543. The short motif at 2555-2571 (KRQEMESGITTPPKMRR) is the Bipartite nuclear localization signal element. Threonine 2565 is subject to Phosphothreonine. Residues serine 2597, serine 2802, and serine 2817 each carry the phosphoserine modification. The interval 2787–2839 (TSQHSPGIDKENVELSPTTGHCNSGRTRHGSASQVQKQRSAGSFKRNSIKKIV) is disordered. The segment covering 2801–2827 (LSPTTGHCNSGRTRHGSASQVQKQRSA) has biased composition (polar residues).

In terms of assembly, interacts with HTR6. Interacts with SPRED2. In terms of processing, ubiquitinated by RNF7/RBX2, leading to its degradation. In terms of tissue distribution, detected in brain, peripheral nerve, lung, colon and muscle.

It is found in the nucleus. Its subcellular location is the nucleolus. The protein localises to the cell membrane. Stimulates the GTPase activity of Ras. NF1 shows greater affinity for Ras GAP, but lower specific activity. May be a regulator of Ras activity. The chain is Neurofibromin (NF1) from Homo sapiens (Human).